The primary structure comprises 432 residues: Acyl-CoA dehydrogenase AFT10-1 (432 aa).

The protein belongs to the acyl-CoA dehydrogenase family. Requires FAD as cofactor.

It functions in the pathway mycotoxin biosynthesis. In terms of biological role, acyl-CoA dehydrogenase; part of the gene clusters that mediate the biosynthesis of the host-selective toxins (HSTs) AF-toxins responsible for Alternaria black spot of strawberry disease by the strawberry pathotype. AF-toxin I and III are valine derivatives of 2,3-dyhydroxy-isovaleric acid and 2-hydroxy-isovaleric acid respectively, while AF II is an isoleucine derivative of 2-hydroxy-valeric acid. These derivatives are bound to a 9,10-epoxy-8-hydroxy-9-methyl-decatrienoic acid (EDA) moiety. On cellular level, AF-toxins affect plasma membrane of susceptible cells and cause a sudden increase in loss of K(+) after a few minutes of toxin treatment. The aldo-keto reductase AFTS1 catalyzes the conversion of 2-keto-isovaleric acid (2-KIV) to 2-hydroxy-isovaleric acid (2-HIV) by reduction of its ketone to an alcohol. The acyl-CoA ligase AFT1, the hydrolase AFT2 and the enoyl-CoA hydratases AFT3 and AFT6, but also the polyketide synthase AFT9, the acyl-CoA dehydrogenase AFT10, the cytochrome P450 monooxygenase AFT11 and the oxidoreductase AFT12 are all involved in the biosynthesis of the AK-, AF- and ACT-toxin common EDA structural moiety. The exact function of each enzyme, and of additional enzymes identified within the AF-toxin clusters have still to be determined. This chain is Acyl-CoA dehydrogenase AFT10-1, found in Alternaria alternata (Alternaria rot fungus).